The chain runs to 632 residues: SH2B adapter protein 2 (632 aa).

Tyr52 bears the Phosphotyrosine mark. Ser141 carries the phosphoserine modification. One can recognise a PH domain in the interval 193–306 (DIQREGALRF…WVADIQGCVD (114 aa)). Ser310 carries the post-translational modification Phosphoserine. Positions 381–409 (TLESPGGSGSDSNNTGEQGAETDPEAEPE) are disordered. Positions 400–409 (AETDPEAEPE) are enriched in acidic residues. The region spanning 417 to 515 (WFHGTLSRVK…SADITLRSYV (99 aa)) is the SH2 domain. 2 disordered regions span residues 516-537 (RAQDPPPEPGPTPPAAPASPAC) and 558-632 (ASPS…YSFY). The segment covering 519-532 (DPPPEPGPTPPAAP) has biased composition (pro residues). 2 stretches are compositionally biased toward low complexity: residues 558–579 (ASPSDAAGASSSSASSSSAASG) and 604–626 (EAVAATAAEEPPEAAPGRARAVE). Tyr629 carries the post-translational modification Phosphotyrosine.

This sequence belongs to the SH2B adapter family. As to quaternary structure, homodimer. Interacts with KIT/c-KIT, SHC1, EPOR, PDGFR, VAV1 and VAV3. Interacts (via N-terminal region) with SHC1. Interacts (via the phosphorylated C-terminus) with GRB2. Interacts (via its SH2 domain) with EPOR, INSR and KIT. Interacts with GRB2 after B-cell antigen receptor stimulation. Interacts (via PH domain) with VAV3. Interacts with NTRK1, NTRK2 and NTRK3 (phosphorylated); after stimulation of the receptor by its extracellular ligand and subsequent autophosphorylation of the receptor. Binds INSR, GRB2, ASB6 and CAP. Insulin stimulation leads to dissociation of CAP. Binds CBS only when SH2B2/APS has become phosphorylated. INSR binding does not depend on the phosphorylation of SH2B2/APS. In terms of processing, tyrosine phosphorylated by JAK2, KIT and other kinases activated by B-cell receptor in response to stimulation with cytokines, IL3, IL5, PDGF, IGF1, IGF2, CSF2/GM-CSF and cross-linking of the B-cell receptor complex. In terms of tissue distribution, expressed in spleen, prostate, testis, uterus, small intestine and skeletal muscle. Among hematopoietic cell lines, expressed exclusively in B-cells. Not expressed in most tumor cell lines.

Its subcellular location is the cytoplasm. The protein localises to the cell membrane. In terms of biological role, adapter protein for several members of the tyrosine kinase receptor family. Involved in multiple signaling pathways. May be involved in coupling from immunoreceptor to Ras signaling. Acts as a negative regulator of cytokine signaling in collaboration with CBL. Binds to EPOR and suppresses EPO-induced STAT5 activation, possibly through a masking effect on STAT5 docking sites in EPOR. Suppresses PDGF-induced mitogenesis. May induce cytoskeletal reorganization via interaction with VAV3. This chain is SH2B adapter protein 2 (SH2B2), found in Homo sapiens (Human).